The primary structure comprises 536 residues: Probable E3 ubiquitin-protein ligase ARI13 (536 aa).

The segment at K83–M328 is TRIAD supradomain. Zn(2+) contacts are provided by C87, C90, C106, H108, C111, C114, C135, C140, C180, C185, C210, C212, C217, C220, H225, C230, C277, C280, C297, C299, C304, C307, H314, and C324. An RING-type 1 zinc finger spans residues C87 to C140. An IBR-type zinc finger spans residues E158 to C230. The RING-type 2; atypical zinc finger occupies C277 to C307. The RanBP2-type zinc-finger motif lies at D495–A526.

The protein belongs to the RBR family. Ariadne subfamily. It depends on Zn(2+) as a cofactor.

It catalyses the reaction [E2 ubiquitin-conjugating enzyme]-S-ubiquitinyl-L-cysteine + [acceptor protein]-L-lysine = [E2 ubiquitin-conjugating enzyme]-L-cysteine + [acceptor protein]-N(6)-ubiquitinyl-L-lysine.. Its pathway is protein modification; protein ubiquitination. Functionally, might act as an E3 ubiquitin-protein ligase, or as part of E3 complex, which accepts ubiquitin from specific E2 ubiquitin-conjugating enzymes and then transfers it to substrates. This Arabidopsis thaliana (Mouse-ear cress) protein is Probable E3 ubiquitin-protein ligase ARI13 (ARI13).